A 515-amino-acid polypeptide reads, in one-letter code: MDFQIISRFTDGGDFQWTKFGTAAFLAVLLSALAFLSYTPRVHQKSPAFTSHKLPFIGSLGFTTEQWKARNWWKRATAESKTGNFSFWLGQRHVVGVTGEAARKMFFTHEALDFVSGALIRPINIHFWPPIHDIFRPDSKSRSKNTYFLRRLYELQSTEQLNHYLPQLLKDARVGMAGLSRVTKPSVSCWETVFTQDVRLLCTDEIVADSKLLATFGRQVETLLFTFSHYNVCFPWLPSPSYYKRRQARYALYNLMEDIVNKRLKNGARGPNDPVQILLDYNDKVDHIIEFFISVLFIAPANSRIIGGQMLNIMSIYRDWQEKVYADIKAAAAAHSPDKNAPLVDQLAFIPLHAWENSFPSIDLCLQETIRMWTSFSMARLNLSPNPIPIPGSDEVIPGNTFVCYNSTEVNFSDSLYPDPKKFDPARFLDGREEFRNEAYGFLGWGRGRHPCPGMRWAKLQQNIIIAYAVAMYDWSSCDETGKPTPQAVHVKELNAARGTVLPSAYCKLVPREKV.

A helical membrane pass occupies residues 20-40; it reads FGTAAFLAVLLSALAFLSYTP. N84, N406, and N411 each carry an N-linked (GlcNAc...) asparagine glycan. C452 provides a ligand contact to heme.

Belongs to the cytochrome P450 family. Heme is required as a cofactor.

The protein resides in the membrane. It functions in the pathway secondary metabolite biosynthesis. Functionally, cytochrome P450 monooxygenase; part of the gene cluster that mediates the biosynthesis of the tetrahydroxanthone dimer neosartorin, which exhibits antibacterial activity. The two different monomeric units appear to be synthesized by the same set of enzymes, among which the Baeyer-Villiger monooxygenase nsrF is the key enzyme for the divergence of the biosynthetic routes. The pathway begins with the synthesis of atrochrysone thioester by the polyketide synthase nsrB. The atrochrysone carboxyl ACP thioesterase nsrC then breaks the thioester bond and releases the atrochrysone carboxylic acid from AacuL. Atrochrysone carboxylic acid is decarboxylated by the decarboxylase nsrE, and oxidized by the anthrone oxygenase nsrD to yield emodin. Emodin is then reduced to emodin hydroquinone by the oxidoreductase nsrR. A-ring reduction by the short chain dehydrogenase nsrJ, dehydration by the scytalone dehydratase-like protein nsrI and probable spontaneous re-oxidation, results in overall deoxygenation to chrysophanol. The Baeyer-Villiger monooxygenase nsrF accepts chrysophanol as a substrate to insert one oxygen atom at two different positions to yield the precursors of both monomric units. NsrF is promiscuous/flexible in interacting with the 2 (non methylated and methylated) aromatic rings of chrysophanol, thus diverging the biosynthetic pathway at this point. After the hydrolysis of the lactones, methylesterification by the methyltransferase nsrG yields respectively moniliphenone and 2,2',6'-trihydroxy-4-methyl-6-methoxya-cyldiphenylmethanone. The next steps are the hydroxylation by the FAD-dependent monooxygenase nsrK, followed by isomerization by the monooxygenase nsrQ. The short chain dehydrogenase/reductase nsrO then catalyzes the C-5 ketoreduction to give the xanthone skeleton of blennolide C and 5-acetylblennolide A. The acetyltransferase nsrL has a strict substrate specificity and uses only blennolide A but not blennolide C to yield 5-acetylblennolide A as the single-acetylated product. In the final step of the biosynthesis, the heterodimerization of the 2 xanthones, blennolide C and 5-acetylblennolide A, is catalyzed by the cytochrome P450 monooxygenase nsrP. NsrP can utilize at least three different xanthones as its substrates to perform the dimerization reaction. The sequence is that of Cytochrome P450 monooxygenase nsrP from Aspergillus novofumigatus (strain IBT 16806).